We begin with the raw amino-acid sequence, 196 residues long: MAAAKDGCGLETAAGNGRRLHLGIPEAVFVEDVDSFMKQPGNETADTVLKKLDEQYQKYKFMELNLAQKKRRLKGQIPEIKQTLEILKYMQKKKESTNSMETRFLLADNLYCKASVPPTDKVCLWLGANVMLEYDIDEAQALLEKNLSTATKNLDSLEEDLDFLRDQFTTTEVNMARVYNWDVKRRNKDDSTKNKA.

The residue at position 2 (alanine 2) is an N-acetylalanine. Lysine 58 carries the N6-acetyllysine modification.

Belongs to the prefoldin subunit alpha family. Heterohexamer of two PFD-alpha type and four PFD-beta type subunits. Binds to the C-terminal part of VHL.

It localises to the cytoplasm. The protein resides in the nucleus. Functionally, binds specifically to cytosolic chaperonin (c-CPN) and transfers target proteins to it. Binds to nascent polypeptide chain and promotes folding in an environment in which there are many competing pathways for nonnative proteins. The chain is Prefoldin subunit 3 (Vbp1) from Mus musculus (Mouse).